An 88-amino-acid polypeptide reads, in one-letter code: UPF0297 protein GK2555 (88 aa).

The protein belongs to the UPF0297 family.

The sequence is that of UPF0297 protein GK2555 from Geobacillus kaustophilus (strain HTA426).